The primary structure comprises 432 residues: FAD-dependent monooxygenase pynG (432 aa).

Residues glutamate 32, arginine 103, aspartate 315, and alanine 328 each coordinate FAD.

Belongs to the paxM FAD-dependent monooxygenase family. FAD serves as cofactor.

Its pathway is secondary metabolite biosynthesis. Functionally, FAD-dependent monooxygenase; part of the gene cluster that mediates the biosynthesis of pyranonigrins, a family of antioxidative compounds. The first step of pyranonigrins biosynthesis is performed by the hybrid PKS-NRPS synthetase that condenses 6 malonyl-CoA units to an acetyl starter unit, to form a 1,3,5-trioxotetradecane-6,8-dienyl-ACP. The enoyl reductase (ER) domain of pynA is likely to be functional during the first two rounds of polyketide chain extension, to generate the saturated C-C bonds of the alkyl side chain. PynA subsequently forms the amide bond between the acyl chain and L-serine. Although pynA has a terminal reductase domain, it appears to require the thioesterase pynI for the release of the straight-chain intermediate from pynA via the formation of a tetramic acid pyranonigrin J. The methyltransferase pynC then coverts pyranonigrin J to pyranonigrin I via N-methylation. The FAD-dependent monooxygenase pynG catalyzes an epoxidation-mediated cyclization to form the dihydro-gamma-pyrone moiety, followed by pynD-catalyzed oxidation of the alcohol to the ketone and enolization to yield the characteristic tetramic acid-fused gamma-pyrone core of pyranonigrin H. Pyranonigrin H is substrate of pynH for dehydration-mediated exo-methylene formation from the serine side chain to produce pyranonigrin E, before the oxidase pynE reduces the exo-methylene of pyranonigrin E into a pendant methyl to form pyranonigrin G. The FAD-linked oxidoreductase pynB performs the reverse reaction and converts pyranonigrin G back to pyranonigrin E. This chain is FAD-dependent monooxygenase pynG, found in Aspergillus niger (strain ATCC MYA-4892 / CBS 513.88 / FGSC A1513).